Consider the following 505-residue polypeptide: Flagellin (505 aa).

It belongs to the bacterial flagellin family.

The protein localises to the secreted. Its subcellular location is the bacterial flagellum. In terms of biological role, flagellin is the subunit protein which polymerizes to form the filaments of bacterial flagella. The polypeptide is Flagellin (fliC) (Salmonella moscow).